Consider the following 247-residue polypeptide: 7-carboxy-7-deazaguanine synthase (247 aa).

Residues 15-17 (IQG) and Arg-30 each bind substrate. Residues 21–247 (LVGRRQIFVR…PQMHRALGLR (227 aa)) form the Radical SAM core domain. Residues Cys-34, Cys-38, and Cys-41 each contribute to the [4Fe-4S] cluster site. A Mg(2+)-binding site is contributed by Thr-43. Thr-78 contacts substrate. Position 80 (Gly-80) interacts with S-adenosyl-L-methionine.

This sequence belongs to the radical SAM superfamily. 7-carboxy-7-deazaguanine synthase family. In terms of assembly, homodimer. Requires [4Fe-4S] cluster as cofactor. S-adenosyl-L-methionine serves as cofactor. Mg(2+) is required as a cofactor.

The enzyme catalyses 6-carboxy-5,6,7,8-tetrahydropterin + H(+) = 7-carboxy-7-deazaguanine + NH4(+). Its pathway is purine metabolism; 7-cyano-7-deazaguanine biosynthesis. Its function is as follows. Catalyzes the complex heterocyclic radical-mediated conversion of 6-carboxy-5,6,7,8-tetrahydropterin (CPH4) to 7-carboxy-7-deazaguanine (CDG), a step common to the biosynthetic pathways of all 7-deazapurine-containing compounds. This Methanothermobacter thermautotrophicus (strain ATCC 29096 / DSM 1053 / JCM 10044 / NBRC 100330 / Delta H) (Methanobacterium thermoautotrophicum) protein is 7-carboxy-7-deazaguanine synthase.